Consider the following 1828-residue polypeptide: Proteasome activator complex subunit 4 (1828 aa).

6 HEAT repeats span residues 462–506 (PEGP…LVDC), 985–1024 (NFCC…NHGG), 1164–1202 (YVLP…QLKR), 1339–1377 (DAFL…GSKH), 1621–1659 (PVQV…YNLF), and 1665–1703 (EESV…CNFL). Positions 1635-1723 (ARSSSWHARY…EALCKTRLPK (89 aa)) are bromodomain-like (BRDL).

This sequence belongs to the BLM10 family. In terms of assembly, homodimer. Interacts with the 20S and 26S proteasomes.

The protein localises to the cytoplasm. The protein resides in the cytosol. It is found in the nucleus. It localises to the nucleus speckle. Functionally, associated component of the proteasome that specifically recognizes acetylated histones and promotes ATP- and ubiquitin-independent degradation of core histones during DNA damage response. Recognizes and binds acetylated histones via its bromodomain-like (BRDL) region and activates the proteasome by opening the gated channel for substrate entry. Binds to the core proteasome via its C-terminus, which occupies the same binding sites as the proteasomal ATPases, opening the closed structure of the proteasome via an active gating mechanism. involved in DNA damage response in somatic cells: binds to acetylated histones and promotes degradation of histones. This chain is Proteasome activator complex subunit 4 (psme4), found in Xenopus laevis (African clawed frog).